We begin with the raw amino-acid sequence, 517 residues long: MQLSVWTYEGPPHIGAMRIATAMRDVHYVLHAPQGDTYADLLFTMIERRDRRPPVTYTTFQARDLGGDTADLLQSAVRAAYERFQPQAMLVGASCTAELIQDDPGGLAQALKLPIPVIPLELPAYQRKENWGASETFYRIVRALAASSADGSPRREREAGARPVCNLLGPTALGFRHRDDLAEVTRQVVELGIEINVVAPWNATPADLARLPQAGFNIVLYPEIALTAAQWLHRQFGQPFTRTIPIGVGATRDFIAEVAALAGVDASPVLARSESRLPWYSRSVDSTYLTGKRVFIFGDATHAVAAARVATQELGFEVVGLGTYAREFAREIREAAAVYGVEPLITDDYLEVEARVGELRPELVLGTQMERHIAKRLGIPCAVISAPCHVQDFPARYSPQMGFEGANVLFDTWVHPLMMGLEEHLLGMFREDHEFADHAPSHLGAASAAPAPAPLRVVETVTSTELAWASDAERELTKIPFFVRGKARRNTERFARERNVNLITLETLYDAKAHFGR.

Position 36 (Asp-36) interacts with [4Fe-4S] cluster. Residue Asp-285 is the Proton donor of the active site. Position 420 to 421 (420 to 421) interacts with substrate; that stretch reads GL.

This sequence belongs to the ChlB/BchB/BchZ family. As to quaternary structure, protochlorophyllide reductase is composed of three subunits; BchL, BchN and BchB. Forms a heterotetramer of two BchB and two BchN subunits. It depends on [4Fe-4S] cluster as a cofactor.

The enzyme catalyses chlorophyllide a + oxidized 2[4Fe-4S]-[ferredoxin] + 2 ADP + 2 phosphate = protochlorophyllide a + reduced 2[4Fe-4S]-[ferredoxin] + 2 ATP + 2 H2O. It functions in the pathway porphyrin-containing compound metabolism; bacteriochlorophyll biosynthesis (light-independent). Component of the dark-operative protochlorophyllide reductase (DPOR) that uses Mg-ATP and reduced ferredoxin to reduce ring D of protochlorophyllide (Pchlide) to form chlorophyllide a (Chlide). This reaction is light-independent. The NB-protein (BchN-BchB) is the catalytic component of the complex. The polypeptide is Light-independent protochlorophyllide reductase subunit B (Bradyrhizobium sp. (strain BTAi1 / ATCC BAA-1182)).